A 341-amino-acid chain; its full sequence is Probable GDP-mannose transporter 2 (341 aa).

The Cytoplasmic segment spans residues 1–11 (MSKHKHEWTES). The chain crosses the membrane as a helical span at residues 12-32 (VANSGPASILSYCASSILMTV). The Lumenal portion of the chain corresponds to 33-46 (TNKFVVNLDNFNMN). The chain crosses the membrane as a helical span at residues 47–67 (FVMLFVQSLVCTVTLCILRIV). The Cytoplasmic segment spans residues 68-85 (GVANFRSLNRTDVKNWFP). A helical membrane pass occupies residues 86 to 106 (ISLLLVLMIYTSLKSLQYLAV). Position 107 (Pro107) is a topological domain, lumenal. A helical membrane pass occupies residues 108 to 128 (IYTIFKNLTIILIAYGEVLFF). Residues 129-139 (GGKVTSMELTS) are Cytoplasmic-facing. Residues 140-160 (FIMMVLSSVVATWGDQQAIAI) form a helical membrane-spanning segment. Over 161–176 (KASSLEDLDQELVEST) the chain is Lumenal. Residues 177–197 (IFVLNPGYLWMFTNCISSALF) traverse the membrane as a helical segment. The Cytoplasmic segment spans residues 198–214 (VLIMRKRIRLTNFKDYD). Residues 215–235 (TMFYNNVLALPLLLVFSFIME) form a helical membrane-spanning segment. Residues 236–251 (DWSTKNLSVNLSADSL) lie on the Lumenal side of the membrane. N-linked (GlcNAc...) asparagine glycans are attached at residues Asn241 and Asn245. A helical membrane pass occupies residues 252–272 (AAMVISGLMSVGISYCSGWCV). Topologically, residues 273–278 (RVTSST) are cytoplasmic. The chain crosses the membrane as a helical span at residues 279 to 299 (TYSMVGALNKLPIALAGLVFF). At 300–303 (DAPK) the chain is on the lumenal side. A helical transmembrane segment spans residues 304–324 (NFLSFFSIFLGFLSGLLYAVA). The Cytoplasmic portion of the chain corresponds to 325–341 (KQKKIQQQKVLAATLEK).

The protein belongs to the TPT transporter family. SLC35D subfamily.

The protein resides in the golgi apparatus membrane. The protein localises to the cytoplasmic vesicle membrane. Its subcellular location is the endoplasmic reticulum membrane. Its function is as follows. Involved in the import of GDP-mannose from the cytoplasm into the Golgi lumen. The protein is Probable GDP-mannose transporter 2 (HVG1) of Saccharomyces cerevisiae (strain Lalvin EC1118 / Prise de mousse) (Baker's yeast).